The primary structure comprises 959 residues: General vesicular transport factor p115 (959 aa).

The interval 1 to 637 is globular head; sequence MNFLRGVMGG…IYKSSEEDKK (637 aa). ARM repeat units lie at residues 20–60, 61–121, 123–163, 166–207, 208–253, 255–310, 311–354, 363–408, 420–459, 473–513, 518–571, and 573–630; these read AETI…VGIQ, AMEH…IKQP, NVTL…IILV, MGVS…VAFE, NAFE…FKEG, YIQR…MFQC, GLLQ…FASV, PAIV…ATLL, SAGQ…EQLL, SLLQ…THFL, NVPF…IEKR, and GKEN…AIYK. Residue Ser50 is modified to Phosphoserine. Lys202 bears the N6-acetyllysine mark. Residues 638–930 are a coiled coil; sequence EEEVKKTLEQ…LSLKSKLKDL (293 aa). The disordered stretch occupies residues 925–959; the sequence is SKLKDLGHPVEEEDESGDQEDDDDELDDGDRDQDI. The span at 935–959 shows a compositional bias: acidic residues; it reads EEEDESGDQEDDDDELDDGDRDQDI. Ser940 is subject to Phosphoserine.

It belongs to the VDP/USO1/EDE1 family. In terms of assembly, homodimer. Dimerizes by parallel association of the tails, resulting in an elongated structure with two globular head domains side by side, and a long rod-like tail structure. Interacts with MIF. Interacts with GM130/GOLGA2; interaction is disrupted upon phosphorylation of GM130/GOLGA2 by CDK1 at the onset of mitosis. Post-translationally, phosphorylated in a cell cycle-specific manner; phosphorylated in interphase but not in mitotic cells. Dephosphorylated protein associates with the Golgi membrane; phosphorylation promostes dissociation.

Its subcellular location is the cytoplasm. The protein resides in the cytosol. It is found in the golgi apparatus membrane. General vesicular transport factor required for intercisternal transport in the Golgi stack; it is required for transcytotic fusion and/or subsequent binding of the vesicles to the target membrane. May well act as a vesicular anchor by interacting with the target membrane and holding the vesicular and target membranes in proximity. This Rattus norvegicus (Rat) protein is General vesicular transport factor p115 (Uso1).